A 134-amino-acid polypeptide reads, in one-letter code: Large ribosomal subunit protein uL22 (134 aa).

Belongs to the universal ribosomal protein uL22 family. In terms of assembly, part of the 50S ribosomal subunit.

This protein binds specifically to 23S rRNA; its binding is stimulated by other ribosomal proteins, e.g. L4, L17, and L20. It is important during the early stages of 50S assembly. It makes multiple contacts with different domains of the 23S rRNA in the assembled 50S subunit and ribosome. Its function is as follows. The globular domain of the protein is located near the polypeptide exit tunnel on the outside of the subunit, while an extended beta-hairpin is found that lines the wall of the exit tunnel in the center of the 70S ribosome. The chain is Large ribosomal subunit protein uL22 from Rhodococcus jostii (strain RHA1).